We begin with the raw amino-acid sequence, 563 residues long: Type 2 DNA topoisomerase 6 subunit B (563 aa).

Residues Asn46, Asp78, 99–100, 109–116, and Lys471 each bind ATP; these read TK and GQQGIGIS.

Belongs to the TOP6B family. Homodimer. Heterotetramer of two Top6A and two Top6B chains.

It catalyses the reaction ATP-dependent breakage, passage and rejoining of double-stranded DNA.. Relaxes both positive and negative superturns and exhibits a strong decatenase activity. The polypeptide is Type 2 DNA topoisomerase 6 subunit B (Thermococcus onnurineus (strain NA1)).